Here is a 91-residue protein sequence, read N- to C-terminus: Small ribosomal subunit protein uS19 (91 aa).

Belongs to the universal ribosomal protein uS19 family.

Its function is as follows. Protein S19 forms a complex with S13 that binds strongly to the 16S ribosomal RNA. The sequence is that of Small ribosomal subunit protein uS19 from Ectopseudomonas mendocina (strain ymp) (Pseudomonas mendocina).